We begin with the raw amino-acid sequence, 376 residues long: 3-dehydroquinate synthase (376 aa).

NAD(+) contacts are provided by residues 115-119 (GVIGD), 139-140 (TS), Lys152, and Lys161. Residues Glu194, His256, and His275 each contribute to the Zn(2+) site.

Belongs to the sugar phosphate cyclases superfamily. Dehydroquinate synthase family. Requires Co(2+) as cofactor. Zn(2+) is required as a cofactor. NAD(+) serves as cofactor.

Its subcellular location is the cytoplasm. It catalyses the reaction 7-phospho-2-dehydro-3-deoxy-D-arabino-heptonate = 3-dehydroquinate + phosphate. It functions in the pathway metabolic intermediate biosynthesis; chorismate biosynthesis; chorismate from D-erythrose 4-phosphate and phosphoenolpyruvate: step 2/7. Functionally, catalyzes the conversion of 3-deoxy-D-arabino-heptulosonate 7-phosphate (DAHP) to dehydroquinate (DHQ). The polypeptide is 3-dehydroquinate synthase (Rhizobium etli (strain CIAT 652)).